Reading from the N-terminus, the 223-residue chain is RNA-free ribonuclease P (223 aa).

Belongs to the HARP family.

The catalysed reaction is Endonucleolytic cleavage of RNA, removing 5'-extranucleotides from tRNA precursor.. RNA-free RNase P that catalyzes the removal of the 5'-leader sequence from pre-tRNA to produce the mature 5'-terminus. The protein is RNA-free ribonuclease P of Methanococcus maripaludis (strain DSM 14266 / JCM 13030 / NBRC 101832 / S2 / LL).